A 98-amino-acid chain; its full sequence is Integration host factor subunit alpha (98 aa).

The interval 51–71 (NFDLRDKNERPGRNPKTGEDI) is disordered. Basic and acidic residues predominate over residues 53-69 (DLRDKNERPGRNPKTGE).

The protein belongs to the bacterial histone-like protein family. In terms of assembly, heterodimer of an alpha and a beta chain.

In terms of biological role, this protein is one of the two subunits of integration host factor, a specific DNA-binding protein that functions in genetic recombination as well as in transcriptional and translational control. The polypeptide is Integration host factor subunit alpha (Vibrio parahaemolyticus serotype O3:K6 (strain RIMD 2210633)).